The following is a 510-amino-acid chain: Peroxidase 2 (510 aa).

Positions 1 to 19 (MRLTYLPLFAGIAIQSASA) are cleaved as a signal peptide. Positions 20-58 (LPDFFKSSVLKPRRTNSLLINPDAQPDLPTAQQASTAAA) are excised as a propeptide. The Proton acceptor role is filled by Asp-228. Position 362 (His-362) interacts with heme.

Homodimer. Heme b is required as a cofactor.

Peroxidase capable of degrading beta-carotene. The chain is Peroxidase 2 from Mycetinis scorodonius (Garlic mushroom).